A 188-amino-acid polypeptide reads, in one-letter code: Protein CRIPTO3 (188 aa).

Residues 78–107 enclose the EGF-like domain; that stretch reads LNRTCCLNGGTCMLESFCACPPSFYGRNCE. Asn79 carries an N-linked (GlcNAc...) asparagine glycan. 6 cysteine pairs are disulfide-bonded: Cys82–Cys89, Cys83–Cys95, Cys97–Cys106, Cys115–Cys133, Cys128–Cys149, and Cys131–Cys140.

The protein belongs to the EGF-CFC (Cripto-1/FRL1/Cryptic) family. In terms of tissue distribution, expressed weakly in lung, colon and breast. Expressed also strongly in primary cancer tissues; lung and colon cancers.

It localises to the cell membrane. Functionally, could play a role in the determination of the epiblastic cells that subsequently give rise to the mesoderm. Activates the Nodal-dependent signaling pathway. This is Protein CRIPTO3 from Homo sapiens (Human).